The primary structure comprises 316 residues: Cytochrome c biogenesis protein CcsA (316 aa).

The next 8 membrane-spanning stretches (helical) occupy residues 12-32 (HISL…LLVY), 44-64 (GMVA…IYSG), 71-91 (LYES…IPYF), 98-118 (LNVL…SGVL), 145-165 (LSYA…VILF), 222-242 (VISL…VWAN), 256-270 (TWAF…IYLH), and 283-303 (AIVA…VNLL).

Belongs to the CcmF/CycK/Ccl1/NrfE/CcsA family. In terms of assembly, may interact with Ccs1.

It is found in the plastid. Its subcellular location is the chloroplast thylakoid membrane. Required during biogenesis of c-type cytochromes (cytochrome c6 and cytochrome f) at the step of heme attachment. This is Cytochrome c biogenesis protein CcsA from Ranunculus macranthus (Large buttercup).